The following is a 159-amino-acid chain: Intron-encoded endonuclease ai4 (159 aa).

It belongs to the LAGLIDADG endonuclease family.

The protein resides in the mitochondrion. In terms of biological role, mitochondrial DNA endonuclease involved in intron homing. The chain is Intron-encoded endonuclease ai4 (ai4) from Dictyostelium discoideum (Social amoeba).